The sequence spans 555 residues: Synaptotagmin-14 (555 aa).

The Extracellular segment spans residues 1–24 (MAIEGGERTCGVHELICIRKVSPE). Residues 25-47 (AVGFLSAVGVFIVLMLLLFLYIN) traverse the membrane as a helical; Signal-anchor for type III membrane protein segment. Residues 48-555 (KKFCFENVGG…VCRWHALLES (508 aa)) lie on the Cytoplasmic side of the membrane. Disordered stretches follow at residues 76–97 (YNSYMDRDEPGSSSESEDEALG), 157–179 (TPPLDELQPPPYQDDSGSPHLSC), and 205–258 (CPSE…PEPE). The span at 211-224 (TGHEAESYHNKGYE) shows a compositional bias: basic and acidic residues. C2 domains are found at residues 260-379 (KYGT…SLPV) and 415-550 (SVPE…CRWH).

This sequence belongs to the synaptotagmin family. As to quaternary structure, homodimer. Can also form heterodimers. As to expression, expressed in heart and testis. Expressed in brain (especially in the cerebellum).

Its subcellular location is the membrane. May be involved in the trafficking and exocytosis of secretory vesicles in non-neuronal tissues. Is Ca(2+)-independent. The polypeptide is Synaptotagmin-14 (Syt14) (Mus musculus (Mouse)).